Consider the following 379-residue polypeptide: GPN-loop GTPase QQT2 (379 aa).

Met1 is modified (N-acetylmethionine). 51 to 56 (GSGKTS) is a GTP binding site. Positions 108 to 110 (GPN) match the Gly-Pro-Asn (GPN)-loop; involved in dimer interface motif. GTP-binding positions include 211–214 (NKTD) and Ala267. Residues 288-322 (METYKADLDMRKADKERLEEERKKHEMEKLRKDME) adopt a coiled-coil conformation. Basic and acidic residues-rich tracts occupy residues 303 to 322 (ERLE…KDME) and 335 to 346 (LKDRDATEKMML). Residues 303-379 (ERLEEERKKH…EDDETKHYYL (77 aa)) are disordered. Over residues 347 to 372 (EEDDEDFQVEDEEDSDDAIDEDDEDD) the composition is skewed to acidic residues.

The protein belongs to the GPN-loop GTPase family. In terms of assembly, heterodimer with QQT1. In terms of tissue distribution, expressed in individual cells of roots, leaves and flowers.

Its subcellular location is the cytoplasm. It is found in the nucleus. The protein localises to the cytoskeleton. The protein resides in the spindle. It localises to the phragmoplast. Small GTPase that is essential for the correct formation of the tangential divisions in early embryos. Associates with microtubule during mitosis and may function in the positioning of the division plane. May participate in the patterning of the early embryo at the octant-dermatogen transition. In Arabidopsis thaliana (Mouse-ear cress), this protein is GPN-loop GTPase QQT2.